Consider the following 211-residue polypeptide: Pyridoxine/pyridoxamine 5'-phosphate oxidase (211 aa).

Substrate is bound by residues 7–10 and Lys65; that span reads RTDY. Residues 60-65, 75-76, Arg81, and Lys82 contribute to the FMN site; these read RILLIK and FT. Residues Tyr122, Arg126, and Ser130 each contribute to the substrate site. FMN-binding positions include 139 to 140 and Trp183; that span reads QS. 189 to 191 is a substrate binding site; it reads RLH. FMN is bound at residue Arg193.

Belongs to the pyridoxamine 5'-phosphate oxidase family. Homodimer. The cofactor is FMN.

It catalyses the reaction pyridoxamine 5'-phosphate + O2 + H2O = pyridoxal 5'-phosphate + H2O2 + NH4(+). The catalysed reaction is pyridoxine 5'-phosphate + O2 = pyridoxal 5'-phosphate + H2O2. Its pathway is cofactor metabolism; pyridoxal 5'-phosphate salvage; pyridoxal 5'-phosphate from pyridoxamine 5'-phosphate: step 1/1. It functions in the pathway cofactor metabolism; pyridoxal 5'-phosphate salvage; pyridoxal 5'-phosphate from pyridoxine 5'-phosphate: step 1/1. Functionally, catalyzes the oxidation of either pyridoxine 5'-phosphate (PNP) or pyridoxamine 5'-phosphate (PMP) into pyridoxal 5'-phosphate (PLP). The protein is Pyridoxine/pyridoxamine 5'-phosphate oxidase of Janthinobacterium sp. (strain Marseille) (Minibacterium massiliensis).